The chain runs to 4814 residues: Nonribosomal peptide synthetase SIDC (4814 aa).

Residues 21–453 are adenylation 1; that stretch reads PGPTLLHQLV…MKTSGCHGAA (433 aa). In terms of domain architecture, Carrier 1 spans 528–601; it reads DLKKSTEPEL…HLVSSIKIID (74 aa). Ser562 carries the O-(pantetheine 4'-phosphoryl)serine modification. A condensation 1 region spans residues 637–1045; the sequence is VQDIIPCTNL…SLLESMRSME (409 aa). The tract at residues 1101–1488 is adenylation 2; the sequence is TYTDLNRNAN…SRVSSATAAV (388 aa). Carrier domains are found at residues 1589–1666 and 2134–2210; these read EDWN…HSSH and SSWT…FENG. 2 positions are modified to O-(pantetheine 4'-phosphoryl)serine: Ser1626 and Ser2171. 2 condensation regions span residues 1706–2210 and 2243–2649; these read LQEA…FENG and LPCT…HQHD. Residues 2709-3100 form an adenylation 3 region; the sequence is TFAQLNSIGN…IRSVKNIHDV (392 aa). The Carrier 4 domain maps to 3203-3280; the sequence is SKDSAGYQKL…DLAVALSTAS (78 aa). Ser3240 is modified (O-(pantetheine 4'-phosphoryl)serine). The tract at residues 3319–3732 is condensation 4; it reads YIYPCSPLQQ…VQVETALVDA (414 aa). Residues 3747 to 3823 enclose the Carrier 5 domain; it reads EVWGPAADVL…YLSSLVMRLT (77 aa). An O-(pantetheine 4'-phosphoryl)serine modification is found at Ser3784. The segment at 3857–4258 is condensation 5; it reads DILPTTPLQD…YVLRHAEEDV (402 aa). One can recognise a Carrier 6 domain in the interval 4295-4368; the sequence is NATSLAIRKV…HMAEQVAALG (74 aa). O-(pantetheine 4'-phosphoryl)serine is present on Ser4329. Residues 4504 to 4686 are condensation 6; sequence ETLLRLRIHH…HEDMQKITAD (183 aa).

The protein belongs to the NRP synthetase family. Requires pantetheine 4'-phosphate as cofactor.

It functions in the pathway siderophore biosynthesis. In terms of biological role, nonribosomal peptide synthetase; part of the gene cluster that mediates the biosynthesis of at least 11 siderophores, including beauverichelin A, dimerumic acid (DA), Na-dimethyl coprogen (NADC), eleutherazine B, ferricrocin (FC), fusarinine A, fusarinine C (FsC), metachelin A, mevalonolactone, rhodotorulic acid (RA) and tenellin. This cocktail of siderophores for iron metabolism is essential for virulence, and more specifically for the fungal virulence in penetrating through the host cuticle. Siderophore synthesis is also involved in conidial germination under iron-deficient conditions. SIDC catalyzes the assembly of ferricrocin whereas SIDD catalyzes the assembly of fusarinine C. This Beauveria bassiana (strain ARSEF 2860) (White muscardine disease fungus) protein is Nonribosomal peptide synthetase SIDC.